We begin with the raw amino-acid sequence, 103 residues long: Large ribosomal subunit protein bL21 (103 aa).

This sequence belongs to the bacterial ribosomal protein bL21 family. Part of the 50S ribosomal subunit. Contacts protein L20.

In terms of biological role, this protein binds to 23S rRNA in the presence of protein L20. In Chromohalobacter salexigens (strain ATCC BAA-138 / DSM 3043 / CIP 106854 / NCIMB 13768 / 1H11), this protein is Large ribosomal subunit protein bL21.